Here is a 247-residue protein sequence, read N- to C-terminus: DNA repair protein RecO (247 aa).

It belongs to the RecO family.

Functionally, involved in DNA repair and RecF pathway recombination. The polypeptide is DNA repair protein RecO (Brucella abortus (strain 2308)).